Consider the following 943-residue polypeptide: Isoleucine--tRNA ligase (943 aa).

Residues 59-69 (PYANGRIHLGH) carry the 'HIGH' region motif. E577 contacts L-isoleucyl-5'-AMP. The 'KMSKS' region motif lies at 618-622 (KMSKS). K621 lines the ATP pocket. 4 residues coordinate Zn(2+): C906, C909, C926, and C929.

It belongs to the class-I aminoacyl-tRNA synthetase family. IleS type 1 subfamily. In terms of assembly, monomer. Requires Zn(2+) as cofactor.

The protein localises to the cytoplasm. The enzyme catalyses tRNA(Ile) + L-isoleucine + ATP = L-isoleucyl-tRNA(Ile) + AMP + diphosphate. In terms of biological role, catalyzes the attachment of isoleucine to tRNA(Ile). As IleRS can inadvertently accommodate and process structurally similar amino acids such as valine, to avoid such errors it has two additional distinct tRNA(Ile)-dependent editing activities. One activity is designated as 'pretransfer' editing and involves the hydrolysis of activated Val-AMP. The other activity is designated 'posttransfer' editing and involves deacylation of mischarged Val-tRNA(Ile). The chain is Isoleucine--tRNA ligase from Stenotrophomonas maltophilia (strain K279a).